The following is a 197-amino-acid chain: ATP-dependent Clp protease proteolytic subunit (197 aa).

The Nucleophile role is filled by S97. The active site involves H122.

This sequence belongs to the peptidase S14 family. Fourteen ClpP subunits assemble into 2 heptameric rings which stack back to back to give a disk-like structure with a central cavity, resembling the structure of eukaryotic proteasomes.

Its subcellular location is the cytoplasm. The catalysed reaction is Hydrolysis of proteins to small peptides in the presence of ATP and magnesium. alpha-casein is the usual test substrate. In the absence of ATP, only oligopeptides shorter than five residues are hydrolyzed (such as succinyl-Leu-Tyr-|-NHMec, and Leu-Tyr-Leu-|-Tyr-Trp, in which cleavage of the -Tyr-|-Leu- and -Tyr-|-Trp bonds also occurs).. Cleaves peptides in various proteins in a process that requires ATP hydrolysis. Has a chymotrypsin-like activity. Plays a major role in the degradation of misfolded proteins. This chain is ATP-dependent Clp protease proteolytic subunit, found in Trichlorobacter lovleyi (strain ATCC BAA-1151 / DSM 17278 / SZ) (Geobacter lovleyi).